Consider the following 208-residue polypeptide: Small ribosomal subunit protein uS4 (208 aa).

The region spanning 98–160 (RRLDNVVYRL…SKSKTRFVEI (63 aa)) is the S4 RNA-binding domain.

It belongs to the universal ribosomal protein uS4 family. In terms of assembly, part of the 30S ribosomal subunit. Contacts protein S5. The interaction surface between S4 and S5 is involved in control of translational fidelity.

Functionally, one of the primary rRNA binding proteins, it binds directly to 16S rRNA where it nucleates assembly of the body of the 30S subunit. With S5 and S12 plays an important role in translational accuracy. This is Small ribosomal subunit protein uS4 from Caldicellulosiruptor bescii (strain ATCC BAA-1888 / DSM 6725 / KCTC 15123 / Z-1320) (Anaerocellum thermophilum).